Consider the following 195-residue polypeptide: SPI-2 type 3 secretion system translocon protein SctB (195 aa).

Residues 44–80 (KLMELAKKLRDIMRSYNVEKQRLAWELQVNVLQTQMK) adopt a coiled-coil conformation. Transmembrane regions (helical) follow at residues 90–110 (MITAGGAMLSGVLTIGLGAVG), 115–135 (LIAGQAVGHTAGGVMGLGAGV), and 170–190 (EIMQQIIGVGSSLVTVLAEIL).

This sequence belongs to the SctB/EspB family. The core secretion machinery of the T3SS is composed of approximately 20 different proteins, including cytoplasmic components, a base, an export apparatus and a needle. This subunit is involved in the formation of a pore, called the translocon, in host membrane. May form a complex with SseB and SseC/SctE2. SseB is required for correct localization of SseD/SctB2 on the bacterial cell surface. Binds to the chaperone SseA.

The protein localises to the secreted. It is found in the cell surface. It localises to the host membrane. Functionally, component of the type III secretion system 2 (SPI-2 T3SS), also called injectisome, which is used to inject bacterial effector proteins into eukaryotic host cells. SseC/SctE2 and SseD/SctB2 are inserted into the host membrane where they form a pore and allow the translocation of effector proteins into the cytosol of target cells. In terms of biological role, required for the translocation of SPI-2 effector proteins. Required for systemic Salmonella infection of the mouse. Essential for SpvB-induced actin depolymerization in the host cell cytoplasm. The polypeptide is SPI-2 type 3 secretion system translocon protein SctB (Salmonella typhimurium (strain LT2 / SGSC1412 / ATCC 700720)).